The primary structure comprises 313 residues: 3'-5' exoribonuclease YhaM (313 aa).

Residues 163–279 (HVVSMLRLAK…LHQIDLMDAS (117 aa)) form the HD domain.

The protein belongs to the YhaM family.

Shows a 3'-5' exoribonuclease activity. The chain is 3'-5' exoribonuclease YhaM from Listeria welshimeri serovar 6b (strain ATCC 35897 / DSM 20650 / CCUG 15529 / CIP 8149 / NCTC 11857 / SLCC 5334 / V8).